A 196-amino-acid chain; its full sequence is Imidazoleglycerol-phosphate dehydratase (196 aa).

The protein belongs to the imidazoleglycerol-phosphate dehydratase family.

It localises to the cytoplasm. It carries out the reaction D-erythro-1-(imidazol-4-yl)glycerol 3-phosphate = 3-(imidazol-4-yl)-2-oxopropyl phosphate + H2O. Its pathway is amino-acid biosynthesis; L-histidine biosynthesis; L-histidine from 5-phospho-alpha-D-ribose 1-diphosphate: step 6/9. In Nitratidesulfovibrio vulgaris (strain DSM 19637 / Miyazaki F) (Desulfovibrio vulgaris), this protein is Imidazoleglycerol-phosphate dehydratase.